A 132-amino-acid polypeptide reads, in one-letter code: Ig kappa chain V-III region MOPC 321 (132 aa).

Residues 1-20 (METDTLLLWVLLLWVPGSTG) form the signal peptide. The interval 21–43 (DIVLTQSPASLAVSLGQRATISC) is framework-1. Cysteines 43 and 112 form a disulfide. The tract at residues 44–58 (RASKSVNTYGNSFMZ) is complementarity-determining-1. Residues 59-73 (WYZZKPGZPPKLLIY) form a framework-2 region. The interval 74–80 (RASNLZS) is complementarity-determining-2. A framework-3 region spans residues 81–112 (GIPARFSGSGSRTBFTLTIBPVZABDVATYFC). The interval 113–121 (ZZSBZBPWT) is complementarity-determining-3. The segment at 122 to 131 (FGSGTKLEIK) is framework-4.

The polypeptide is Ig kappa chain V-III region MOPC 321 (Mus musculus (Mouse)).